Reading from the N-terminus, the 348-residue chain is tRNA N6-adenosine threonylcarbamoyltransferase (348 aa).

Fe cation-binding residues include histidine 115 and histidine 119. Residues 138-142 (LVSGG), aspartate 171, glycine 184, and asparagine 276 contribute to the substrate site. A Fe cation-binding site is contributed by aspartate 304.

Belongs to the KAE1 / TsaD family. Requires Fe(2+) as cofactor.

It is found in the cytoplasm. It catalyses the reaction L-threonylcarbamoyladenylate + adenosine(37) in tRNA = N(6)-L-threonylcarbamoyladenosine(37) in tRNA + AMP + H(+). Functionally, required for the formation of a threonylcarbamoyl group on adenosine at position 37 (t(6)A37) in tRNAs that read codons beginning with adenine. Is involved in the transfer of the threonylcarbamoyl moiety of threonylcarbamoyl-AMP (TC-AMP) to the N6 group of A37, together with TsaE and TsaB. TsaD likely plays a direct catalytic role in this reaction. In Xylella fastidiosa (strain 9a5c), this protein is tRNA N6-adenosine threonylcarbamoyltransferase.